We begin with the raw amino-acid sequence, 138 residues long: Brain natriuretic peptide (138 aa).

The signal sequence occupies residues 1-22 (MRLSSMWLCSLLLILKLQLSST). Disordered regions lie at residues 50–84 (EQMAVDQSAPGQRDLLDSLSTEDAGDGPQPDAGLD) and 99–138 (SVRNDSSRRSSGCFGRRMDRIGSMSSLGCNTVGRYNPKQR). A disulfide bridge connects residues Cys-111 and Cys-127.

The protein belongs to the natriuretic peptide family.

It localises to the secreted. Functionally, cardiac hormone which may function as a paracrine antifibrotic factor in the heart. Also plays a key role in cardiovascular homeostasis through natriuresis, diuresis, vasorelaxation, and inhibition of renin and aldosterone secretion. The protein is Brain natriuretic peptide (nppb) of Oreochromis mossambicus (Mozambique tilapia).